Reading from the N-terminus, the 156-residue chain is Methylated-DNA--protein-cysteine methyltransferase (156 aa).

Cys126 acts as the Nucleophile; methyl group acceptor in catalysis.

Belongs to the MGMT family.

Its subcellular location is the cytoplasm. It catalyses the reaction a 6-O-methyl-2'-deoxyguanosine in DNA + L-cysteinyl-[protein] = S-methyl-L-cysteinyl-[protein] + a 2'-deoxyguanosine in DNA. It carries out the reaction a 4-O-methyl-thymidine in DNA + L-cysteinyl-[protein] = a thymidine in DNA + S-methyl-L-cysteinyl-[protein]. Involved in the cellular defense against the biological effects of O6-methylguanine (O6-MeG) and O4-methylthymine (O4-MeT) in DNA. Repairs the methylated nucleobase in DNA by stoichiometrically transferring the methyl group to a cysteine residue in the enzyme. This is a suicide reaction: the enzyme is irreversibly inactivated. The chain is Methylated-DNA--protein-cysteine methyltransferase from Methanosarcina acetivorans (strain ATCC 35395 / DSM 2834 / JCM 12185 / C2A).